Consider the following 160-residue polypeptide: Ribosomal RNA large subunit methyltransferase H (160 aa).

Leu76 and Gly108 together coordinate S-adenosyl-L-methionine.

Belongs to the RNA methyltransferase RlmH family. As to quaternary structure, homodimer.

It localises to the cytoplasm. It carries out the reaction pseudouridine(1915) in 23S rRNA + S-adenosyl-L-methionine = N(3)-methylpseudouridine(1915) in 23S rRNA + S-adenosyl-L-homocysteine + H(+). In terms of biological role, specifically methylates the pseudouridine at position 1915 (m3Psi1915) in 23S rRNA. This Bradyrhizobium sp. (strain BTAi1 / ATCC BAA-1182) protein is Ribosomal RNA large subunit methyltransferase H.